The chain runs to 488 residues: 3-octaprenyl-4-hydroxybenzoate carboxy-lyase (488 aa).

Mn(2+) is bound at residue N172. Prenylated FMN-binding positions include 175–177 (IYR), 189–191 (RWL), and 194–195 (RG). A Mn(2+)-binding site is contributed by E238. D287 acts as the Proton donor in catalysis.

It belongs to the UbiD family. In terms of assembly, homohexamer. Requires prenylated FMN as cofactor. The cofactor is Mn(2+).

Its subcellular location is the cell membrane. The enzyme catalyses a 4-hydroxy-3-(all-trans-polyprenyl)benzoate + H(+) = a 2-(all-trans-polyprenyl)phenol + CO2. It functions in the pathway cofactor biosynthesis; ubiquinone biosynthesis. Catalyzes the decarboxylation of 3-octaprenyl-4-hydroxy benzoate to 2-octaprenylphenol, an intermediate step in ubiquinone biosynthesis. The sequence is that of 3-octaprenyl-4-hydroxybenzoate carboxy-lyase from Pseudomonas putida (strain W619).